The sequence spans 424 residues: 5-methylthioadenosine/S-adenosylhomocysteine deaminase (424 aa).

The Zn(2+) site is built by H60 and H62. Residues E89 and H181 each contribute to the substrate site. H208 serves as a coordination point for Zn(2+). Substrate contacts are provided by E211 and D296. D296 lines the Zn(2+) pocket.

Belongs to the metallo-dependent hydrolases superfamily. MTA/SAH deaminase family. The cofactor is Zn(2+).

The catalysed reaction is S-adenosyl-L-homocysteine + H2O + H(+) = S-inosyl-L-homocysteine + NH4(+). It catalyses the reaction S-methyl-5'-thioadenosine + H2O + H(+) = S-methyl-5'-thioinosine + NH4(+). Functionally, catalyzes the deamination of 5-methylthioadenosine and S-adenosyl-L-homocysteine into 5-methylthioinosine and S-inosyl-L-homocysteine, respectively. Is also able to deaminate adenosine. In Thermococcus sibiricus (strain DSM 12597 / MM 739), this protein is 5-methylthioadenosine/S-adenosylhomocysteine deaminase.